A 308-amino-acid chain; its full sequence is 26S proteasome non-ATPase regulatory subunit 14 (308 aa).

The MPN domain maps to 29-164; the sequence is VYISSLALLK…IDAFRLINPN (136 aa). Positions 111, 113, and 124 each coordinate Zn(2+). The short motif at 111–124 is the JAMM motif element; it reads HSHPGFGCWLSGVD.

The protein belongs to the peptidase M67A family. PSMD14 subfamily. Component of the 19S regulatory cap of the 26S proteasome.

Its function is as follows. Metalloprotease component of the 26S proteasome that specifically cleaves 'Lys-63'-linked polyubiquitin chains. The 26S proteasome is involved in the ATP-dependent degradation of ubiquitinated proteins. The function of the 'Lys-63'-specific deubiquitination of the proteasome is unclear. In Drosophila melanogaster (Fruit fly), this protein is 26S proteasome non-ATPase regulatory subunit 14 (Rpn11).